The sequence spans 80 residues: Raniseptin-4 (80 aa).

Positions 1-22 are cleaved as a signal peptide; the sequence is MAFLKKSLFLVLFLGIVSLSIC. The propeptide occupies 23–49; that stretch reads EEEKREGEEEEKQEEENEELSEEELRD.

The protein belongs to the frog skin active peptide (FSAP) family. Dermaseptin subfamily. Expressed by the skin glands.

It localises to the secreted. Has antibacterial activity. The sequence is that of Raniseptin-4 from Boana raniceps (Chaco tree frog).